The following is a 423-amino-acid chain: MKLLVIGNGGREHALAWKLAQSPKVETVFVAPGNAGTAIEPKLQNIDLTAHQDLIEFCRKENIVFTVVGPEAPLAAGIVDDFRAAGLKIFGPTQYAAQLESSKDFAKAFMAKYNIPTAQYQTFENADAAHDYVNQKGAPIVIKADGLAAGKGVIVAMTLDEAHAAIDDMLLDNKMGNAGARVVIEDFLQGEEASFIVMVDGNNVLPMATSQDHKRLLDGDKGLNTGGMGAYSPAPVVTPVVYERAMNEIILPTVAGMKAEGHEFTGFLYAGLMIDQSGAPYTIEFNCRFGDPETQPIMSRLNSDLSDLVEAAIDGKLDSVTAEWSPQTAVGVVLAAQNYPETPKKGDIISGLDAANQIGKVFHAGTTANEKGDVLTNGGRVLCVVGLGDNVAQAKAKAYGALEKISFDGMQYRKDIADKAINR.

An ATP-grasp domain is found at 107–314; the sequence is KAFMAKYNIP…LSDLVEAAID (208 aa). Residue 133–194 coordinates ATP; it reads VNQKGAPIVI…EDFLQGEEAS (62 aa). Positions 284 and 286 each coordinate Mg(2+).

It belongs to the GARS family. Mg(2+) serves as cofactor. The cofactor is Mn(2+).

It carries out the reaction 5-phospho-beta-D-ribosylamine + glycine + ATP = N(1)-(5-phospho-beta-D-ribosyl)glycinamide + ADP + phosphate + H(+). Its pathway is purine metabolism; IMP biosynthesis via de novo pathway; N(1)-(5-phospho-D-ribosyl)glycinamide from 5-phospho-alpha-D-ribose 1-diphosphate: step 2/2. This is Phosphoribosylamine--glycine ligase from Neisseria meningitidis serogroup B (strain ATCC BAA-335 / MC58).